The sequence spans 63 residues: Large ribosomal subunit protein uL29 (63 aa).

It belongs to the universal ribosomal protein uL29 family.

The chain is Large ribosomal subunit protein uL29 from Pelagibacter ubique (strain HTCC1062).